The chain runs to 807 residues: Probable phosphoketolase (807 aa).

It belongs to the XFP family. Thiamine diphosphate serves as cofactor.

This chain is Probable phosphoketolase, found in Nitrosospira multiformis (strain ATCC 25196 / NCIMB 11849 / C 71).